The chain runs to 602 residues: Glutamine--fructose-6-phosphate aminotransferase [isomerizing] (602 aa).

Cysteine 2 (nucleophile; for GATase activity) is an active-site residue. Residues 2 to 219 (CGIIGYIGDR…DGEYAILTKD (218 aa)) form the Glutamine amidotransferase type-2 domain. SIS domains follow at residues 280–420 (VAEE…VLGT) and 453–592 (LAET…PDKP). The For Fru-6P isomerization activity role is filled by lysine 597.

As to quaternary structure, homodimer.

The protein resides in the cytoplasm. The enzyme catalyses D-fructose 6-phosphate + L-glutamine = D-glucosamine 6-phosphate + L-glutamate. Functionally, catalyzes the first step in hexosamine metabolism, converting fructose-6P into glucosamine-6P using glutamine as a nitrogen source. The chain is Glutamine--fructose-6-phosphate aminotransferase [isomerizing] from Thermococcus kodakarensis (strain ATCC BAA-918 / JCM 12380 / KOD1) (Pyrococcus kodakaraensis (strain KOD1)).